The chain runs to 217 residues: Small ribosomal subunit protein uS3 (217 aa).

The 69-residue stretch at 38 to 106 (IRKFIDNELK…KVHINVIEIK (69 aa)) folds into the KH type-2 domain.

This sequence belongs to the universal ribosomal protein uS3 family. In terms of assembly, part of the 30S ribosomal subunit. Forms a tight complex with proteins S10 and S14.

Its function is as follows. Binds the lower part of the 30S subunit head. Binds mRNA in the 70S ribosome, positioning it for translation. The sequence is that of Small ribosomal subunit protein uS3 from Staphylococcus aureus (strain MSSA476).